Here is a 402-residue protein sequence, read N- to C-terminus: 1-deoxy-D-xylulose 5-phosphate reductoisomerase (402 aa).

NADPH contacts are provided by threonine 13, glycine 14, serine 15, isoleucine 16, and asparagine 126. Lysine 127 contacts 1-deoxy-D-xylulose 5-phosphate. NADPH is bound at residue glutamate 128. Aspartate 152 serves as a coordination point for Mn(2+). Serine 153, glutamate 154, serine 188, and histidine 211 together coordinate 1-deoxy-D-xylulose 5-phosphate. Glutamate 154 lines the Mn(2+) pocket. Glycine 217 lines the NADPH pocket. Residues serine 224, asparagine 229, lysine 230, and glutamate 233 each contribute to the 1-deoxy-D-xylulose 5-phosphate site. Glutamate 233 is a Mn(2+) binding site.

It belongs to the DXR family. Requires Mg(2+) as cofactor. The cofactor is Mn(2+).

It catalyses the reaction 2-C-methyl-D-erythritol 4-phosphate + NADP(+) = 1-deoxy-D-xylulose 5-phosphate + NADPH + H(+). It participates in isoprenoid biosynthesis; isopentenyl diphosphate biosynthesis via DXP pathway; isopentenyl diphosphate from 1-deoxy-D-xylulose 5-phosphate: step 1/6. Its function is as follows. Catalyzes the NADPH-dependent rearrangement and reduction of 1-deoxy-D-xylulose-5-phosphate (DXP) to 2-C-methyl-D-erythritol 4-phosphate (MEP). The polypeptide is 1-deoxy-D-xylulose 5-phosphate reductoisomerase (Psychrobacter arcticus (strain DSM 17307 / VKM B-2377 / 273-4)).